The following is a 98-amino-acid chain: Serine rich endogenous peptide 10 (98 aa).

The first 29 residues, 1-29 (MERKKFSSKFIHLLIVFLLLCTFLSRTES), serve as a signal peptide directing secretion. Residues 50-98 (NSAIGTPSSTSDHAPGSNGRKLMSIYRPNGDIFTGPSGSGHGGGRTPAP) are disordered. Residues 52–61 (AIGTPSSTSD) show a composition bias toward polar residues. 2 short sequence motifs (SCOOP motif) span residues 52–66 (AIGT…APGS) and 80–94 (DIFT…GGGR). 2 consecutive short sequence motifs (sxS motif essential for MIK2 binding) follow at residues 58–60 (STS) and 86–88 (SGS). Positions 86–98 (SGSGHGGGRTPAP) are enriched in gly residues.

Belongs to the serine rich endogenous peptide (SCOOP) phytocytokine family. Interacts with MIK2 (via extracellular leucine-rich repeat domain); this interaction triggers the formation of complex between MIK2 and the BAK1/SERK3 and SERK4 coreceptors, and subsequent BAK1 activation by phosphorylation. In terms of tissue distribution, mostly expressed in leaves and seedlings shoots, to a lower extent, in roots, but barely in flowers.

The protein localises to the cell membrane. The protein resides in the secreted. It is found in the extracellular space. Its subcellular location is the apoplast. Its function is as follows. Brassicaceae-specific phytocytokine (plant endogenous peptide released into the apoplast) perceived by MIK2 in a BAK1/SERK3 and SERK4 coreceptors-dependent manner, that modulates various physiological and antimicrobial processes including growth prevention and reactive oxygen species (ROS) response regulation. Inhibits root growth and regulates root meristems. Promotes ROS production and MAPK (e.g. MPK3, MPK4 and MPK6) activation in a MIK2-dependent manner, thus leading to the up-regulation of immune-related marker genes (e.g. WRKY30, WRKY33 and CYP81F2). This Arabidopsis thaliana (Mouse-ear cress) protein is Serine rich endogenous peptide 10.